Here is a 324-residue protein sequence, read N- to C-terminus: Glycerol-3-phosphate dehydrogenase [NAD(P)+] (324 aa).

Residues serine 10, phenylalanine 11, arginine 31, and lysine 106 each contribute to the NADPH site. Sn-glycerol 3-phosphate-binding residues include lysine 106, glycine 134, and serine 136. Alanine 138 contacts NADPH. Positions 189, 244, 254, 255, and 256 each coordinate sn-glycerol 3-phosphate. Catalysis depends on lysine 189, which acts as the Proton acceptor. Arginine 255 is an NADPH binding site. Residues isoleucine 279 and glutamate 281 each contribute to the NADPH site.

The protein belongs to the NAD-dependent glycerol-3-phosphate dehydrogenase family.

The protein resides in the cytoplasm. The enzyme catalyses sn-glycerol 3-phosphate + NAD(+) = dihydroxyacetone phosphate + NADH + H(+). The catalysed reaction is sn-glycerol 3-phosphate + NADP(+) = dihydroxyacetone phosphate + NADPH + H(+). It functions in the pathway membrane lipid metabolism; glycerophospholipid metabolism. Functionally, catalyzes the reduction of the glycolytic intermediate dihydroxyacetone phosphate (DHAP) to sn-glycerol 3-phosphate (G3P), the key precursor for phospholipid synthesis. This is Glycerol-3-phosphate dehydrogenase [NAD(P)+] from Ehrlichia canis (strain Jake).